The chain runs to 167 residues: MFPMVTGFMNYGQQTVRAARYIGQSLIITLSHSNRFPVTIQYPYEKLMTSERFRGRIHFEFDKCIACEVCVRVCPIDLPVVDWKFERDIRKKRLLNYSIDFGICIFCGNCVEYCPTNCLSMTEEYELSTYDRHELNYNQTALGRLPMPVIDDYTIRTIFNLPKIKSK.

2 4Fe-4S ferredoxin-type domains span residues 55 to 84 and 95 to 124; these read GRIH…VDWK and LNYS…MTEE. [4Fe-4S] cluster contacts are provided by Cys-64, Cys-67, Cys-70, Cys-74, Cys-104, Cys-107, Cys-110, and Cys-114.

The protein belongs to the complex I 23 kDa subunit family. In terms of assembly, NDH is composed of at least 16 different subunits, 5 of which are encoded in the nucleus. It depends on [4Fe-4S] cluster as a cofactor.

Its subcellular location is the plastid. The protein localises to the chloroplast thylakoid membrane. The enzyme catalyses a plastoquinone + NADH + (n+1) H(+)(in) = a plastoquinol + NAD(+) + n H(+)(out). The catalysed reaction is a plastoquinone + NADPH + (n+1) H(+)(in) = a plastoquinol + NADP(+) + n H(+)(out). NDH shuttles electrons from NAD(P)H:plastoquinone, via FMN and iron-sulfur (Fe-S) centers, to quinones in the photosynthetic chain and possibly in a chloroplast respiratory chain. The immediate electron acceptor for the enzyme in this species is believed to be plastoquinone. Couples the redox reaction to proton translocation, and thus conserves the redox energy in a proton gradient. This Pelargonium hortorum (Common geranium) protein is NAD(P)H-quinone oxidoreductase subunit I, chloroplastic.